A 56-amino-acid polypeptide reads, in one-letter code: Trypsin inhibitor 1 (56 aa).

Residues 1–25 (MATTMAKLITLVVLAILAFVEVSVS) form the signal peptide. A propeptide spanning residues 26–39 (GYKTSISTITIEDN) is cleaved from the precursor. Positions 40 to 53 (GRCTKSIPPICFPD) form a cross-link, cyclopeptide (Gly-Asp). C42 and C50 are disulfide-bonded. A propeptide spanning residues 54–56 (GRP) is cleaved from the precursor.

Post-translationally, this is a cyclic peptide.

Functionally, inhibits trypsin, cathepsin G, elastase, chymotrypsin and thrombin. Does not inhibit factor Xa. The polypeptide is Trypsin inhibitor 1 (Helianthus annuus (Common sunflower)).